The sequence spans 242 residues: Venom nerve growth factor 2 (242 aa).

A signal peptide spans methionine 1–alanine 18. Residues alanine 19–arginine 125 constitute a propeptide that is removed on maturation. The disordered stretch occupies residues lysine 46 to leucine 69. Residues arginine 52–aspartate 66 show a composition bias toward basic and acidic residues. 3 disulfide bridges follow: cysteine 139–cysteine 203, cysteine 181–cysteine 231, and cysteine 191–cysteine 233. N-linked (GlcNAc...) asparagine glycosylation is present at asparagine 147.

Belongs to the NGF-beta family. In terms of assembly, homodimer; non-covalently linked. In terms of tissue distribution, expressed by the venom gland.

Its subcellular location is the secreted. Its function is as follows. Nerve growth factor is important for the development and maintenance of the sympathetic and sensory nervous systems. It stimulates division and differentiation of sympathetic and embryonic sensory neurons as well as basal forebrain cholinergic neurons in the brain. Its relevance in the snake venom is not clear. However, it has been shown to inhibit metalloproteinase-dependent proteolysis of platelet glycoprotein Ib alpha, suggesting a metalloproteinase inhibition to prevent metalloprotease autodigestion and/or protection against prey proteases. Binds a lipid between the two protein chains in the homodimer. The lipid-bound form promotes histamine relase from mouse mast cells, contrary to the lipid-free form. The sequence is that of Venom nerve growth factor 2 from Demansia vestigiata (Lesser black whip snake).